The sequence spans 328 residues: Probable ABC transporter permease YtrC (328 aa).

Helical transmembrane passes span 16 to 36 (VVIL…IVNT), 60 to 80 (ISNL…CFLG), 110 to 130 (GFVI…LILV), 144 to 164 (IGVI…GALT), 167 to 187 (AFAQ…IIAL), 236 to 256 (YLLL…FISF), 277 to 297 (VQIL…YYTG), and 300 to 320 (IIGY…VSYF).

It belongs to the ABC-5 integral membrane protein family. As to quaternary structure, the complex is composed of 2 ATP-binding proteins (YtrB and YtrE), 2 transmembrane proteins (YtrC and YtrD) and a solute-binding protein (YtrF).

It is found in the cell membrane. In terms of biological role, part of the ABC transporter complex YtrBCDEF that plays a role in acetoin utilization during stationary phase and sporulation. The sequence is that of Probable ABC transporter permease YtrC (ytrC) from Bacillus subtilis (strain 168).